A 181-amino-acid polypeptide reads, in one-letter code: Oligoribonuclease (181 aa).

Positions 8–171 (LIWIDLEMTG…QDIQESIAEL (164 aa)) constitute an Exonuclease domain. The active site involves Y129.

The protein belongs to the oligoribonuclease family.

Its subcellular location is the cytoplasm. In terms of biological role, 3'-to-5' exoribonuclease specific for small oligoribonucleotides. The protein is Oligoribonuclease of Shewanella putrefaciens (strain CN-32 / ATCC BAA-453).